The sequence spans 212 residues: Ribonuclease HII (212 aa).

An RNase H type-2 domain is found at 2-206; it reads TPLVGVDEAG…CERIRAEAEQ (205 aa). Residues D8, E9, and D101 each contribute to the a divalent metal cation site.

The protein belongs to the RNase HII family. The cofactor is Mn(2+). It depends on Mg(2+) as a cofactor.

The protein resides in the cytoplasm. The catalysed reaction is Endonucleolytic cleavage to 5'-phosphomonoester.. Its function is as follows. Endonuclease that specifically degrades the RNA of RNA-DNA hybrids. This Natronomonas pharaonis (strain ATCC 35678 / DSM 2160 / CIP 103997 / JCM 8858 / NBRC 14720 / NCIMB 2260 / Gabara) (Halobacterium pharaonis) protein is Ribonuclease HII.